Here is a 271-residue protein sequence, read N- to C-terminus: 3-methyl-2-oxobutanoate hydroxymethyltransferase (271 aa).

Residues Asp44 and Asp83 each contribute to the Mg(2+) site. Residues 44–45, Asp83, and Lys112 each bind 3-methyl-2-oxobutanoate; that span reads DS. Glu114 contacts Mg(2+). The active-site Proton acceptor is Glu181.

The protein belongs to the PanB family. Homodecamer; pentamer of dimers. It depends on Mg(2+) as a cofactor.

Its subcellular location is the cytoplasm. It carries out the reaction 3-methyl-2-oxobutanoate + (6R)-5,10-methylene-5,6,7,8-tetrahydrofolate + H2O = 2-dehydropantoate + (6S)-5,6,7,8-tetrahydrofolate. Its pathway is cofactor biosynthesis; coenzyme A biosynthesis. Functionally, catalyzes the reversible reaction in which hydroxymethyl group from 5,10-methylenetetrahydrofolate is transferred onto alpha-ketoisovalerate to form ketopantoate. In Staphylothermus marinus (strain ATCC 43588 / DSM 3639 / JCM 9404 / F1), this protein is 3-methyl-2-oxobutanoate hydroxymethyltransferase.